Consider the following 142-residue polypeptide: Hemoglobin subunit alpha-4 (142 aa).

Ser-1 is subject to N-acetylserine. The Globin domain maps to 1 to 142 (SLSAKDKANV…LALALAEKYR (142 aa)). Residue His-59 participates in O2 binding. Residue His-88 participates in heme b binding.

Belongs to the globin family. As to quaternary structure, heterotetramer of two alpha chains and two beta chains. Red blood cells.

Its function is as follows. Involved in oxygen transport from gills to the various peripheral tissues. In Oncorhynchus mykiss (Rainbow trout), this protein is Hemoglobin subunit alpha-4 (hba4).